The sequence spans 208 residues: Small ribosomal subunit protein uS4 (208 aa).

Residues 24 to 52 (GVKPFDVKTKKANKAPGQHGQARGGKQSE) form a disordered region. An S4 RNA-binding domain is found at 98-160 (SRLDNVVYRM…AKQQLRIKNA (63 aa)).

It belongs to the universal ribosomal protein uS4 family. As to quaternary structure, part of the 30S ribosomal subunit. Contacts protein S5. The interaction surface between S4 and S5 is involved in control of translational fidelity.

Functionally, one of the primary rRNA binding proteins, it binds directly to 16S rRNA where it nucleates assembly of the body of the 30S subunit. In terms of biological role, with S5 and S12 plays an important role in translational accuracy. The polypeptide is Small ribosomal subunit protein uS4 (Acinetobacter baumannii (strain ACICU)).